The following is a 208-amino-acid chain: MAKYTGPKLKQARREGTDLFLKSGVRPIDSKCKIEQVPGQHGAGARRARMSDYALQLREKQKLRRMYGVLERQFRRYYKEAARRKGSTGENLLKLLESRLDNVVYRMGFGSTRAEARQLINHKGVLVNGQGINIPSYQVRAEDVVAVREKAKRQDRIKFALELAQARAEAEWIEINAGKLEGVFKRVPERSELAPDIQENLVVELYSK.

One can recognise an S4 RNA-binding domain in the interval 98 to 164 (SRLDNVVYRM…DRIKFALELA (67 aa)).

It belongs to the universal ribosomal protein uS4 family. In terms of assembly, part of the 30S ribosomal subunit. Contacts protein S5. The interaction surface between S4 and S5 is involved in control of translational fidelity.

One of the primary rRNA binding proteins, it binds directly to 16S rRNA where it nucleates assembly of the body of the 30S subunit. Functionally, with S5 and S12 plays an important role in translational accuracy. In Nitrosococcus oceani (strain ATCC 19707 / BCRC 17464 / JCM 30415 / NCIMB 11848 / C-107), this protein is Small ribosomal subunit protein uS4.